The chain runs to 127 residues: MTRIKRGSIARRRRTKAHSFASKFREAHARLTRAITQQQIRALFSADRDRDKQKIDFRRLWITRINALIREKGVFHNYSKFINDLYKSQLLLNRKILAQIAISNRNCLYMIANEIIKKVGFESAVII.

The protein belongs to the bacterial ribosomal protein bL20 family.

Its subcellular location is the plastid. The protein localises to the chloroplast. Functionally, binds directly to 23S ribosomal RNA and is necessary for the in vitro assembly process of the 50S ribosomal subunit. It is not involved in the protein synthesizing functions of that subunit. The polypeptide is Large ribosomal subunit protein bL20c (Jasminum nudiflorum (Winter jasmine)).